Reading from the N-terminus, the 127-residue chain is Small ribosomal subunit protein uS13 (127 aa).

Positions 100–127 are disordered; sequence GQRTRTNARTRKGVRKTVAGKKKAPAKK. Over residues 101–127 the composition is skewed to basic residues; the sequence is QRTRTNARTRKGVRKTVAGKKKAPAKK.

Belongs to the universal ribosomal protein uS13 family. In terms of assembly, part of the 30S ribosomal subunit. Forms a loose heterodimer with protein S19. Forms two bridges to the 50S subunit in the 70S ribosome.

Located at the top of the head of the 30S subunit, it contacts several helices of the 16S rRNA. In the 70S ribosome it contacts the 23S rRNA (bridge B1a) and protein L5 of the 50S subunit (bridge B1b), connecting the 2 subunits; these bridges are implicated in subunit movement. Contacts the tRNAs in the A and P-sites. The polypeptide is Small ribosomal subunit protein uS13 (Synechococcus sp. (strain JA-3-3Ab) (Cyanobacteria bacterium Yellowstone A-Prime)).